The chain runs to 92 residues: Putative membrane protein insertion efficiency factor (92 aa).

The protein belongs to the UPF0161 family.

It localises to the cell inner membrane. In terms of biological role, could be involved in insertion of integral membrane proteins into the membrane. In Synechococcus sp. (strain CC9605), this protein is Putative membrane protein insertion efficiency factor.